The primary structure comprises 506 residues: Histidine ammonia-lyase (506 aa).

Residues 143–145 constitute a cross-link (5-imidazolinone (Ala-Gly)); it reads ASG. Serine 144 is subject to 2,3-didehydroalanine (Ser).

It belongs to the PAL/histidase family. In terms of processing, contains an active site 4-methylidene-imidazol-5-one (MIO), which is formed autocatalytically by cyclization and dehydration of residues Ala-Ser-Gly.

Its subcellular location is the cytoplasm. The enzyme catalyses L-histidine = trans-urocanate + NH4(+). The protein operates within amino-acid degradation; L-histidine degradation into L-glutamate; N-formimidoyl-L-glutamate from L-histidine: step 1/3. This Citrobacter koseri (strain ATCC BAA-895 / CDC 4225-83 / SGSC4696) protein is Histidine ammonia-lyase.